We begin with the raw amino-acid sequence, 33 residues long: U1-pseudomyrmecitoxin-Pt1 subunit LS2 (33 aa).

It belongs to the myrmexin family. As to quaternary structure, heterodimer composed of subunit LS2 and subunit SS1, heterodimer composed of subunit LS2 and SS2, and heterodimer composed of subunit LS2 and SS3; disulfide-linked. Expressed by the venom gland.

Its subcellular location is the secreted. In terms of biological role, this heterodimer may have anti-inflammatory properties, since the myrmexin complex (composed of 6 SS-LS heterodimers) inhibits carrageenin-induced edema in a dose-dependent manner (after subcutaneous injection into rats). This is U1-pseudomyrmecitoxin-Pt1 subunit LS2 from Pseudomyrmex triplarinus (Ant).